Here is a 495-residue protein sequence, read N- to C-terminus: MRLPKLLTLLLWHLAWLDLELICTVLGAPDLGQRTPGAKPGLTKAEAKERPPLARNVFRPGGHIYGVGATNARAKGSSGQTQAKKDEPRKMPPRSGGPETKPGPSSQTRQAAARTVTPKGQLPGGKASSKAGSAPSSFLLKKTREPGTPREPKEPFRPPPITPHEYMLSLYRTLSDADRKGGNSSVKLEAGLANTITSFIDKGQDDRGPAVRKQRYVFDISALEKDGLLGAELRILRKKPLDVAKPAVPSSGRVAQLKLSSCPSGRQPAALLDVRSVPGLDGSGWEVFDIWKLFRNFKNSAQLCLELEAWERGRAVDLRGLGFERTARQVHEKALFLVFGRTKKRDLFFNEIKARSGQDDKTVYEYLFSQRRKRRAPLANRQGKRPSKNLKARCSRKALHVNFKDMGWDDWIIAPLEYEAFHCEGLCEFPLRSHLEPTNHAVIQTLMNSMDPESTPPTCCVPTRLSPISILFIDSANNVVYKQYEDMVVESCGCR.

A signal peptide spans Met1–Gly27. Positions Ala28–Arg375 are excised as a propeptide. A disordered region spans residues Asp30–Thr162. Residues Gly124–Ser137 are compositionally biased toward low complexity. The span at Lys142–Phe156 shows a compositional bias: basic and acidic residues. An N-linked (GlcNAc...) asparagine glycan is attached at Asn183. Intrachain disulfides connect Cys394-Cys460, Cys423-Cys492, and Cys427-Cys494.

The protein belongs to the TGF-beta family. In terms of assembly, homodimer; disulfide-linked. Interacts with serine proteases, HTRA1 and HTRA3. Following LPS binding, may form a complex with CXCR4, HSP90AA1 and HSPA8. Interacts with high affinity with NOG; inhibits chondrogenesis. Interacts with high affinity with BMPR1B and lower affinity with BMPR1A; positively regulates chondrocyte differentiation and induces SMAD-dependent signaling. Interacts with FBN1 (via N-terminal domain) and FBN2. Interacts with TGFBR3.

The protein resides in the secreted. Its subcellular location is the cell membrane. Growth factor involved in bone and cartilage formation. During cartilage development regulates differentiation of chondrogenic tissue through two pathways. Firstly, positively regulates differentiation of chondrogenic tissue through its binding of high affinity with BMPR1B and of less affinity with BMPR1A, leading to induction of SMAD1-SMAD5-SMAD8 complex phosphorylation and then SMAD protein signaling transduction. Secondly, negatively regulates chondrogenic differentiation through its interaction with NOG. Required to prevent excessive muscle loss upon denervation. This function requires SMAD4 and is mediated by phosphorylated SMAD1/5/8. Binds bacterial lipopolysaccharide (LPS) and mediates LPS-induced inflammatory response, including TNF secretion by monocytes. This chain is Growth/differentiation factor 5 (Gdf5), found in Mus musculus (Mouse).